A 453-amino-acid polypeptide reads, in one-letter code: tRNA modification GTPase MnmE (453 aa).

Arg23, Glu80, and Lys120 together coordinate (6S)-5-formyl-5,6,7,8-tetrahydrofolate. The 160-residue stretch at 216 to 375 (GSKIVIIGKP…LIKYLKDLNC (160 aa)) folds into the TrmE-type G domain. Asn226 is a K(+) binding site. Residues 226-231 (NSGKSS), 245-251 (TSIEGTT), and 270-273 (DTAG) contribute to the GTP site. Residue Ser230 participates in Mg(2+) binding. K(+) is bound by residues Thr245, Ile247, and Thr250. A Mg(2+)-binding site is contributed by Thr251. Position 453 (Lys453) interacts with (6S)-5-formyl-5,6,7,8-tetrahydrofolate.

The protein belongs to the TRAFAC class TrmE-Era-EngA-EngB-Septin-like GTPase superfamily. TrmE GTPase family. In terms of assembly, homodimer. Heterotetramer of two MnmE and two MnmG subunits. The cofactor is K(+).

The protein localises to the cytoplasm. Its function is as follows. Exhibits a very high intrinsic GTPase hydrolysis rate. Involved in the addition of a carboxymethylaminomethyl (cmnm) group at the wobble position (U34) of certain tRNAs, forming tRNA-cmnm(5)s(2)U34. This is tRNA modification GTPase MnmE from Wigglesworthia glossinidia brevipalpis.